Consider the following 95-residue polypeptide: Protein TusB (95 aa).

It belongs to the DsrH/TusB family. In terms of assembly, heterohexamer, formed by a dimer of trimers. The hexameric TusBCD complex contains 2 copies each of TusB, TusC and TusD. The TusBCD complex interacts with TusE.

The protein resides in the cytoplasm. In terms of biological role, part of a sulfur-relay system required for 2-thiolation of 5-methylaminomethyl-2-thiouridine (mnm(5)s(2)U) at tRNA wobble positions. The sequence is that of Protein TusB from Yersinia pseudotuberculosis serotype O:1b (strain IP 31758).